The primary structure comprises 61 residues: Small ribosomal subunit protein uS14 (61 aa).

Residues Cys24, Cys27, Cys40, and Cys43 each contribute to the Zn(2+) site.

Belongs to the universal ribosomal protein uS14 family. Zinc-binding uS14 subfamily. In terms of assembly, part of the 30S ribosomal subunit. Contacts proteins S3 and S10. Zn(2+) serves as cofactor.

In terms of biological role, binds 16S rRNA, required for the assembly of 30S particles and may also be responsible for determining the conformation of the 16S rRNA at the A site. In Petrotoga mobilis (strain DSM 10674 / SJ95), this protein is Small ribosomal subunit protein uS14.